A 457-amino-acid polypeptide reads, in one-letter code: Tubulin beta chain (457 aa).

Positions 11, 69, 138, 142, 143, 144, 204, and 226 each coordinate GTP. Glutamate 69 is a Mg(2+) binding site. Residues 431-457 are disordered; sequence EGEEEEDAYAEGAVVNGDQSYEDQYAA.

The protein belongs to the tubulin family. Dimer of alpha and beta chains. A typical microtubule is a hollow water-filled tube with an outer diameter of 25 nm and an inner diameter of 15 nM. Alpha-beta heterodimers associate head-to-tail to form protofilaments running lengthwise along the microtubule wall with the beta-tubulin subunit facing the microtubule plus end conferring a structural polarity. Microtubules usually have 13 protofilaments but different protofilament numbers can be found in some organisms and specialized cells. Requires Mg(2+) as cofactor.

The protein resides in the cytoplasm. The protein localises to the cytoskeleton. In terms of biological role, tubulin is the major constituent of microtubules, a cylinder consisting of laterally associated linear protofilaments composed of alpha- and beta-tubulin heterodimers. Microtubules grow by the addition of GTP-tubulin dimers to the microtubule end, where a stabilizing cap forms. Below the cap, tubulin dimers are in GDP-bound state, owing to GTPase activity of alpha-tubulin. The polypeptide is Tubulin beta chain (TUBB1) (Porphyra purpurea (Red seaweed)).